The primary structure comprises 147 residues: Prefoldin subunit alpha (147 aa).

The protein belongs to the prefoldin alpha subunit family. In terms of assembly, heterohexamer of two alpha and four beta subunits.

It localises to the cytoplasm. Molecular chaperone capable of stabilizing a range of proteins. Seems to fulfill an ATP-independent, HSP70-like function in archaeal de novo protein folding. This is Prefoldin subunit alpha from Saccharolobus islandicus (strain M.16.27) (Sulfolobus islandicus).